Here is a 186-residue protein sequence, read N- to C-terminus: UPF0157 protein SCO7215 (186 aa).

Belongs to the UPF0157 (GrpB) family.

The polypeptide is UPF0157 protein SCO7215 (Streptomyces coelicolor (strain ATCC BAA-471 / A3(2) / M145)).